Here is a 265-residue protein sequence, read N- to C-terminus: Neuronal membrane glycoprotein M6-b (265 aa).

Residues 31-51 traverse the membrane as a helical segment; the sequence is GGVPYASLVATILCFSGVALF. The N-linked (GlcNAc...) asparagine glycan is linked to asparagine 73. Helical transmembrane passes span 90 to 110 and 136 to 156; these read VIYG…AEGF and FVFL…FSAV. Asparagine 177 carries an N-linked (GlcNAc...) asparagine glycan. Residues 224–244 form a helical membrane-spanning segment; sequence LFIVACAGAGATVIALLIYMM. The residue at position 257 (serine 257) is a Phosphoserine.

The protein belongs to the myelin proteolipid protein family. Interacts with SERT. Neurons and glia; cerebellar Bergmann glia, in glia within white matter tracts of the cerebellum and cerebrum, and in embryonic dorsal root ganglia.

Its subcellular location is the cell membrane. In terms of biological role, may be involved in neural development. Involved in regulation of osteoblast function and bone formation. Involved in matrix vesicle release by osteoblasts; this function seems to involve maintenance of the actin cytoskeleton. May be involved in cellular trafficking of SERT and thereby in regulation of serotonin uptake. In Homo sapiens (Human), this protein is Neuronal membrane glycoprotein M6-b (GPM6B).